The chain runs to 121 residues: Small ribosomal subunit protein uS13 (121 aa).

The interval Gly-94–Lys-121 is disordered.

The protein belongs to the universal ribosomal protein uS13 family. In terms of assembly, part of the 30S ribosomal subunit. Forms a loose heterodimer with protein S19. Forms two bridges to the 50S subunit in the 70S ribosome.

Located at the top of the head of the 30S subunit, it contacts several helices of the 16S rRNA. In the 70S ribosome it contacts the 23S rRNA (bridge B1a) and protein L5 of the 50S subunit (bridge B1b), connecting the 2 subunits; these bridges are implicated in subunit movement. Contacts the tRNAs in the A and P-sites. The protein is Small ribosomal subunit protein uS13 of Ralstonia nicotianae (strain ATCC BAA-1114 / GMI1000) (Ralstonia solanacearum).